Consider the following 237-residue polypeptide: Demethylmenaquinone methyltransferase (237 aa).

Residues Thr58, Asp79, and Asn106 to Ala107 each bind S-adenosyl-L-methionine.

Belongs to the class I-like SAM-binding methyltransferase superfamily. MenG/UbiE family.

The enzyme catalyses a 2-demethylmenaquinol + S-adenosyl-L-methionine = a menaquinol + S-adenosyl-L-homocysteine + H(+). It participates in quinol/quinone metabolism; menaquinone biosynthesis; menaquinol from 1,4-dihydroxy-2-naphthoate: step 2/2. Its function is as follows. Methyltransferase required for the conversion of demethylmenaquinol (DMKH2) to menaquinol (MKH2). In Listeria innocua serovar 6a (strain ATCC BAA-680 / CLIP 11262), this protein is Demethylmenaquinone methyltransferase.